A 346-amino-acid polypeptide reads, in one-letter code: Hydroxymethylglutaryl-CoA synthase (346 aa).

D28 contributes to the (3S)-3-hydroxy-3-methylglutaryl-CoA binding site. The Proton donor/acceptor role is filled by E80. Residues C112 and T153 each coordinate (3S)-3-hydroxy-3-methylglutaryl-CoA. C112 functions as the Acyl-thioester intermediate in the catalytic mechanism. R199 lines the CoA pocket. Residues T201 and H234 each coordinate (3S)-3-hydroxy-3-methylglutaryl-CoA. H234 functions as the Proton donor/acceptor in the catalytic mechanism. K239 contacts CoA. 3 residues coordinate (3S)-3-hydroxy-3-methylglutaryl-CoA: K243, N266, and S296.

This sequence belongs to the thiolase-like superfamily. Archaeal HMG-CoA synthase family. In terms of assembly, interacts with acetoacetyl-CoA thiolase that catalyzes the precedent step in the pathway and with a DUF35 protein. The acetoacetyl-CoA thiolase/HMG-CoA synthase complex channels the intermediate via a fused CoA-binding site, which allows for efficient coupling of the endergonic thiolase reaction with the exergonic HMGCS reaction.

It catalyses the reaction acetoacetyl-CoA + acetyl-CoA + H2O = (3S)-3-hydroxy-3-methylglutaryl-CoA + CoA + H(+). It functions in the pathway metabolic intermediate biosynthesis; (R)-mevalonate biosynthesis; (R)-mevalonate from acetyl-CoA: step 2/3. In terms of biological role, catalyzes the condensation of acetyl-CoA with acetoacetyl-CoA to form 3-hydroxy-3-methylglutaryl-CoA (HMG-CoA). Functions in the mevalonate (MVA) pathway leading to isopentenyl diphosphate (IPP), a key precursor for the biosynthesis of isoprenoid compounds that are building blocks of archaeal membrane lipids. This is Hydroxymethylglutaryl-CoA synthase from Methanothermobacter thermautotrophicus (strain ATCC 29096 / DSM 1053 / JCM 10044 / NBRC 100330 / Delta H) (Methanobacterium thermoautotrophicum).